A 479-amino-acid chain; its full sequence is Ribulose bisphosphate carboxylase large chain (479 aa).

Positions 1-2 (MS) are excised as a propeptide. Proline 3 is modified (N-acetylproline). An N6,N6,N6-trimethyllysine modification is found at lysine 14. The substrate site is built by asparagine 123 and threonine 173. Lysine 175 functions as the Proton acceptor in the catalytic mechanism. A substrate-binding site is contributed by lysine 177. The Mg(2+) site is built by lysine 201, aspartate 203, and glutamate 204. Lysine 201 is modified (N6-carboxylysine). Histidine 294 acts as the Proton acceptor in catalysis. Substrate contacts are provided by arginine 295, histidine 327, and serine 379.

The protein belongs to the RuBisCO large chain family. Type I subfamily. Heterohexadecamer of 8 large chains and 8 small chains. Mg(2+) is required as a cofactor.

It localises to the plastid. The protein localises to the chloroplast. It carries out the reaction 2 (2R)-3-phosphoglycerate + 2 H(+) = D-ribulose 1,5-bisphosphate + CO2 + H2O. It catalyses the reaction D-ribulose 1,5-bisphosphate + O2 = 2-phosphoglycolate + (2R)-3-phosphoglycerate + 2 H(+). RuBisCO catalyzes two reactions: the carboxylation of D-ribulose 1,5-bisphosphate, the primary event in carbon dioxide fixation, as well as the oxidative fragmentation of the pentose substrate in the photorespiration process. Both reactions occur simultaneously and in competition at the same active site. This is Ribulose bisphosphate carboxylase large chain from Jasminum nudiflorum (Winter jasmine).